A 168-amino-acid chain; its full sequence is Crossover junction endodeoxyribonuclease RuvC (168 aa).

Residues Asp10, Glu70, and Asp143 contribute to the active site. Positions 10, 70, and 143 each coordinate Mg(2+).

It belongs to the RuvC family. Homodimer which binds Holliday junction (HJ) DNA. The HJ becomes 2-fold symmetrical on binding to RuvC with unstacked arms; it has a different conformation from HJ DNA in complex with RuvA. In the full resolvosome a probable DNA-RuvA(4)-RuvB(12)-RuvC(2) complex forms which resolves the HJ. The cofactor is Mg(2+).

It is found in the cytoplasm. The enzyme catalyses Endonucleolytic cleavage at a junction such as a reciprocal single-stranded crossover between two homologous DNA duplexes (Holliday junction).. The RuvA-RuvB-RuvC complex processes Holliday junction (HJ) DNA during genetic recombination and DNA repair. Endonuclease that resolves HJ intermediates. Cleaves cruciform DNA by making single-stranded nicks across the HJ at symmetrical positions within the homologous arms, yielding a 5'-phosphate and a 3'-hydroxyl group; requires a central core of homology in the junction. The consensus cleavage sequence is 5'-(A/T)TT(C/G)-3'. Cleavage occurs on the 3'-side of the TT dinucleotide at the point of strand exchange. HJ branch migration catalyzed by RuvA-RuvB allows RuvC to scan DNA until it finds its consensus sequence, where it cleaves and resolves the cruciform DNA. The protein is Crossover junction endodeoxyribonuclease RuvC of Thermotoga maritima (strain ATCC 43589 / DSM 3109 / JCM 10099 / NBRC 100826 / MSB8).